Consider the following 173-residue polypeptide: NADH-ubiquinone oxidoreductase chain 6 (173 aa).

5 helical membrane-spanning segments follow: residues 1-21 (MTYFVLFLGLCFVLGGLAVAS), 27-47 (YGVVGLVLASVAGCGWLLSLG), 48-68 (VSFVSLVLFMVYLGGMLVVFV), 87-107 (VVGYGVGFVMVLMVGMVVGGF), and 139-159 (CGVGMFLVAGWGLLLTLFVVL).

It belongs to the complex I subunit 6 family.

It localises to the mitochondrion membrane. It catalyses the reaction a ubiquinone + NADH + 5 H(+)(in) = a ubiquinol + NAD(+) + 4 H(+)(out). Functionally, core subunit of the mitochondrial membrane respiratory chain NADH dehydrogenase (Complex I) that is believed to belong to the minimal assembly required for catalysis. Complex I functions in the transfer of electrons from NADH to the respiratory chain. The immediate electron acceptor for the enzyme is believed to be ubiquinone. The chain is NADH-ubiquinone oxidoreductase chain 6 (MT-ND6) from Aethia pusilla (Least auklet).